Consider the following 209-residue polypeptide: MTIELLTPFTKVELEPEIKEKKRKQVGILGGNFNPVHNAHLIVADQVRQQLGLDQVLLMPEYQPPHVDKKETIPEHHRLKMLELAIEGIDGLVIETIELERKGISYTYDTMKILTEKNPDTDYYFIIGADMVDYLPKWYRIDELVDMVQFVGVQRPRYKVGTSYPVIWVDVPLMDISSSMVRDFLAQGRKPNFLLPQPVLDYIEKEGLY.

Belongs to the NadD family.

It carries out the reaction nicotinate beta-D-ribonucleotide + ATP + H(+) = deamido-NAD(+) + diphosphate. It participates in cofactor biosynthesis; NAD(+) biosynthesis; deamido-NAD(+) from nicotinate D-ribonucleotide: step 1/1. Functionally, catalyzes the reversible adenylation of nicotinate mononucleotide (NaMN) to nicotinic acid adenine dinucleotide (NaAD). This is Probable nicotinate-nucleotide adenylyltransferase from Streptococcus pneumoniae serotype 4 (strain ATCC BAA-334 / TIGR4).